We begin with the raw amino-acid sequence, 148 residues long: uncharacterized protein (148 aa).

This is an uncharacterized protein from Haemophilus influenzae (strain ATCC 51907 / DSM 11121 / KW20 / Rd).